The sequence spans 330 residues: Ribosomal RNA large subunit methyltransferase F (330 aa).

The protein belongs to the methyltransferase superfamily. METTL16/RlmF family.

The protein localises to the cytoplasm. The catalysed reaction is adenosine(1618) in 23S rRNA + S-adenosyl-L-methionine = N(6)-methyladenosine(1618) in 23S rRNA + S-adenosyl-L-homocysteine + H(+). Specifically methylates the adenine in position 1618 of 23S rRNA. The protein is Ribosomal RNA large subunit methyltransferase F of Pseudoalteromonas atlantica (strain T6c / ATCC BAA-1087).